A 501-amino-acid polypeptide reads, in one-letter code: Glycerol kinase (501 aa).

Thr16 contributes to the ADP binding site. Residues Thr16, Thr17, and Ser18 each coordinate ATP. Thr16 contributes to the sn-glycerol 3-phosphate binding site. ADP is bound at residue Arg20. The sn-glycerol 3-phosphate site is built by Arg84, Glu85, Tyr135, and Asp242. Glycerol is bound by residues Arg84, Glu85, Tyr135, Asp242, and Gln243. ADP-binding residues include Thr264 and Gly307. 4 residues coordinate ATP: Thr264, Gly307, Gln311, and Gly408. Gly408 is a binding site for ADP.

This sequence belongs to the FGGY kinase family.

It carries out the reaction glycerol + ATP = sn-glycerol 3-phosphate + ADP + H(+). It functions in the pathway polyol metabolism; glycerol degradation via glycerol kinase pathway; sn-glycerol 3-phosphate from glycerol: step 1/1. Key enzyme in the regulation of glycerol uptake and metabolism. Catalyzes the phosphorylation of glycerol to yield sn-glycerol 3-phosphate. The chain is Glycerol kinase from Saccharolobus islandicus (strain M.14.25 / Kamchatka #1) (Sulfolobus islandicus).